The sequence spans 133 residues: ATP synthase epsilon chain (133 aa).

This sequence belongs to the ATPase epsilon chain family. F-type ATPases have 2 components, CF(1) - the catalytic core - and CF(0) - the membrane proton channel. CF(1) has five subunits: alpha(3), beta(3), gamma(1), delta(1), epsilon(1). CF(0) has three main subunits: a, b and c.

Its subcellular location is the cellular thylakoid membrane. Functionally, produces ATP from ADP in the presence of a proton gradient across the membrane. The protein is ATP synthase epsilon chain of Prochlorococcus marinus (strain MIT 9303).